The primary structure comprises 456 residues: General transcription factor IIE subunit 1 (456 aa).

The region spanning 11-100 (LDDLVKMVIR…LWYIDYKHII (90 aa)) is the HTH TFE/IIEalpha-type domain. Residues 129–157 (CQTCHKVYTALDIPKLLNMDTGALACEIC) form a C4-type zinc finger. The segment at 345 to 402 (ESAPDSGDADGNGSNSGSGGSTIEGNDGGNGEHQNKKMKLDDSQTVSSMSQSDDDGKD) is disordered. Over residues 347–357 (APDSGDADGNG) the composition is skewed to low complexity. A compositionally biased stretch (gly residues) spans 358-375 (SNSGSGGSTIEGNDGGNG). Basic and acidic residues predominate over residues 377–386 (HQNKKMKLDD).

It belongs to the TFIIE alpha subunit family. In terms of assembly, TFIIE is a tetramer of two alpha and two beta subunits.

Its subcellular location is the nucleus. Its function is as follows. Recruits TFIIH to the initiation complex and stimulates the RNA polymerase II C-terminal domain kinase and DNA-dependent ATPase activities of TFIIH. Both TFIIH and TFIIE are required for promoter clearance by RNA polymerase. In Dictyostelium discoideum (Social amoeba), this protein is General transcription factor IIE subunit 1 (gtf2e1-1).